An 89-amino-acid polypeptide reads, in one-letter code: Small ribosomal subunit protein uS15 (89 aa).

This sequence belongs to the universal ribosomal protein uS15 family. As to quaternary structure, part of the 30S ribosomal subunit. Forms a bridge to the 50S subunit in the 70S ribosome, contacting the 23S rRNA.

One of the primary rRNA binding proteins, it binds directly to 16S rRNA where it helps nucleate assembly of the platform of the 30S subunit by binding and bridging several RNA helices of the 16S rRNA. Its function is as follows. Forms an intersubunit bridge (bridge B4) with the 23S rRNA of the 50S subunit in the ribosome. The chain is Small ribosomal subunit protein uS15 from Geobacillus thermodenitrificans (strain NG80-2).